The sequence spans 833 residues: Leucine--tRNA ligase (833 aa).

A 'HIGH' region motif is present at residues 41 to 52; that stretch reads PYPSGAGLHVGH. The short motif at 610–614 is the 'KMSKS' region element; it reads KMSKS. An ATP-binding site is contributed by lysine 613.

The protein belongs to the class-I aminoacyl-tRNA synthetase family.

It localises to the cytoplasm. The enzyme catalyses tRNA(Leu) + L-leucine + ATP = L-leucyl-tRNA(Leu) + AMP + diphosphate. The polypeptide is Leucine--tRNA ligase (Streptococcus mutans serotype c (strain ATCC 700610 / UA159)).